The chain runs to 389 residues: Flagellar P-ring protein (389 aa).

The signal sequence occupies residues 1-33; that stretch reads MRPLVAARRRAAACCALAACMLALAFAPAAARA.

Belongs to the FlgI family. In terms of assembly, the basal body constitutes a major portion of the flagellar organelle and consists of four rings (L,P,S, and M) mounted on a central rod.

It localises to the periplasm. It is found in the bacterial flagellum basal body. In terms of biological role, assembles around the rod to form the L-ring and probably protects the motor/basal body from shearing forces during rotation. In Burkholderia mallei (strain ATCC 23344), this protein is Flagellar P-ring protein.